Here is a 779-residue protein sequence, read N- to C-terminus: Probable glutamine--tRNA ligase (779 aa).

Residues 268 to 270 (EPN) and 274 to 280 (HIGHAKA) contribute to the ATP site. 2 residues coordinate L-glutamine: Asp300 and Tyr440. ATP contacts are provided by residues Thr459, 488-489 (RL), and 496-498 (LSK).

It belongs to the class-I aminoacyl-tRNA synthetase family.

It catalyses the reaction tRNA(Gln) + L-glutamine + ATP = L-glutaminyl-tRNA(Gln) + AMP + diphosphate. The polypeptide is Probable glutamine--tRNA ligase (glnS) (Dictyostelium discoideum (Social amoeba)).